A 182-amino-acid polypeptide reads, in one-letter code: CASP-like protein 2B1 (182 aa).

Residues 1–12 (MKLIDRRMRLTE) lie on the Cytoplasmic side of the membrane. A helical transmembrane segment spans residues 13–31 (LLLRCSISVFALLALILVV). At 32–52 (TDTEVKLIFTIKKTAKYTDMK) the chain is on the extracellular side. Residues 53-73 (AVVFLVVANGIAAVYSLLQSV) traverse the membrane as a helical segment. Residues 74 to 89 (RCVVGTMKGKVLFSKP) lie on the Cytoplasmic side of the membrane. A helical transmembrane segment spans residues 90–110 (LAWAFFSGDQAMAYLNVAAIA). The Extracellular portion of the chain corresponds to 111 to 141 (ATAESGVIAREGEEDLQWMRVCTMYGKFCNQ). A helical transmembrane segment spans residues 142-162 (MAIGVSSALLASIAMVFVSCI). Residues 163–182 (SAFSLFRLYGATKDRRTTPW) are Cytoplasmic-facing.

It belongs to the Casparian strip membrane proteins (CASP) family. In terms of assembly, homodimer and heterodimers.

It localises to the cell membrane. In Arabidopsis thaliana (Mouse-ear cress), this protein is CASP-like protein 2B1.